We begin with the raw amino-acid sequence, 215 residues long: uncharacterized protein (215 aa).

Helical transmembrane passes span 1-21 (MTAE…AIGM), 36-56 (VLIG…FADV), 67-87 (SRIA…NILV), 92-112 (IVGL…MVIG), and 118-138 (LGIY…QLTF).

The protein belongs to the MgtC/SapB family.

It is found in the cell inner membrane. This is an uncharacterized protein from Escherichia coli O157:H7.